Here is a 234-residue protein sequence, read N- to C-terminus: Probable transcriptional regulatory protein PFL_3960 (234 aa).

The protein belongs to the TACO1 family.

It localises to the cytoplasm. This chain is Probable transcriptional regulatory protein PFL_3960, found in Pseudomonas fluorescens (strain ATCC BAA-477 / NRRL B-23932 / Pf-5).